The following is a 468-amino-acid chain: Cysteine--tRNA ligase (468 aa).

C33 is a Zn(2+) binding site. Positions 35-45 (ATVQGLPHIGH) match the 'HIGH' region motif. Positions 211, 236, and 240 each coordinate Zn(2+). A 'KMSKS' region motif is present at residues 267–271 (KMSKS). Position 270 (K270) interacts with ATP.

The protein belongs to the class-I aminoacyl-tRNA synthetase family. In terms of assembly, monomer. It depends on Zn(2+) as a cofactor.

It is found in the cytoplasm. It carries out the reaction tRNA(Cys) + L-cysteine + ATP = L-cysteinyl-tRNA(Cys) + AMP + diphosphate. This chain is Cysteine--tRNA ligase, found in Mycobacterium ulcerans (strain Agy99).